A 273-amino-acid chain; its full sequence is Undecaprenyl-diphosphatase (273 aa).

7 helical membrane passes run glycine 13 to asparagine 35, valine 45 to tyrosine 62, phenylalanine 82 to lysine 102, leucine 108 to valine 128, threonine 186 to leucine 206, leucine 219 to leucine 239, and phenylalanine 250 to isoleucine 270.

The protein belongs to the UppP family.

It localises to the cell inner membrane. It carries out the reaction di-trans,octa-cis-undecaprenyl diphosphate + H2O = di-trans,octa-cis-undecaprenyl phosphate + phosphate + H(+). Its function is as follows. Catalyzes the dephosphorylation of undecaprenyl diphosphate (UPP). Confers resistance to bacitracin. This chain is Undecaprenyl-diphosphatase, found in Neisseria gonorrhoeae (strain NCCP11945).